A 3933-amino-acid polypeptide reads, in one-letter code: Circularly permutated Ras protein 2 (3933 aa).

A coiled-coil region spans residues 12-46; sequence VHEVKKQELESILLQQEQEKQAKEEKESIKDTDDK. Disordered regions lie at residues 23 to 101, 136 to 189, 1022 to 1054, and 2817 to 2839; these read ILLQ…IEKK, DIRE…RKET, ITTT…TTTT, and NNNN…RPTR. Residues 28-62 show a composition bias toward basic and acidic residues; it reads EQEKQAKEEKESIKDTDDKPIEDTEHSTNNDKPIE. Over residues 70–92 the composition is skewed to low complexity; that stretch reads TPTTTTTTKPTDEASSSSNNNNN. The span at 136-145 shows a compositional bias: basic and acidic residues; sequence DIREPTDKPF. Over residues 146–156 the composition is skewed to polar residues; that stretch reads ENTSNIETTRQ. Positions 167 to 215 form a coiled coil; that stretch reads KTEAERLEQEQKQKQYDENRKETDRKLELELERLKNKKEEVEQIRAYFQ. Basic and acidic residues predominate over residues 168–189; the sequence is TEAERLEQEQKQKQYDENRKET. The segment covering 2817 to 2826 has biased composition (low complexity); it reads NNNNNNNRYN. Residues 2853–2857, 2913–2916, and 2976–2983 each bind GTP; these read DTAGQ, TKAD, and GDGGIGKS. Disordered stretches follow at residues 3036–3086, 3107–3142, and 3733–3754; these read LQSA…LSSR, RKSS…QDYE, and VIEP…PSSS. The span at 3070–3086 shows a compositional bias: low complexity; the sequence is PSSSSTRTSVSTSLSSR. Residues 3107–3120 are compositionally biased toward basic and acidic residues; it reads RKSSLVEEESKRQY. Residues 3121–3141 are compositionally biased toward acidic residues; sequence DDDDESKSESSEYDDDDDQDY.

This sequence belongs to the small GTPase superfamily. CpRas family.

This chain is Circularly permutated Ras protein 2 (cpras2), found in Dictyostelium discoideum (Social amoeba).